Reading from the N-terminus, the 480-residue chain is Phenolic acid decarboxylase (480 aa).

The Mn(2+) site is built by Asn-163, His-185, and Glu-227. Prenylated FMN-binding positions include Asn-163 to Arg-168 and Met-184 to His-185. Glu-278 functions as the Proton donor in the catalytic mechanism. Residues Thr-443–Glu-466 are disordered.

The protein belongs to the UbiD family. YclC subfamily. As to quaternary structure, homohexamer. Requires prenylated FMN as cofactor. The cofactor is Mn(2+).

The enzyme catalyses 4-hydroxybenzoate + H(+) = phenol + CO2. It carries out the reaction 3,4-dihydroxybenzoate + H(+) = catechol + CO2. With respect to regulation, inhibited by Zn(2+), (2,3,4)-trihydroxybenzoate and (3,4,5)-trihydroxybenzoate. Ammonium and rubidium ions decrease the activity of the carboxylation of 3,4-dihydroxybenzoate by about 20%. Its function is as follows. Involved in the non-oxidative decarboxylation and detoxification of phenolic derivatives under anaerobic conditions. Oxygen-sensitive phenolic acid decarboxylase that catalyzes the reversible decarboxylation of 4-hydroxybenzoate and 3,4-dihydroxybenzoate. The sequence is that of Phenolic acid decarboxylase from Sedimentibacter hydroxybenzoicus (Clostridium hydroxybenzoicum).